Here is a 370-residue protein sequence, read N- to C-terminus: DNA-directed RNA polymerase II subunit GRINL1A (370 aa).

A disordered region spans residues Met1–Ser20. Residues Asp15–Arg69 are a coiled coil. An important for transcription repressor activity region spans residues Lys29–Val68. 3 disordered regions span residues Asp93–Gly172, Asp204–Pro226, and Lys241–Arg283. A compositionally biased stretch (polar residues) spans Asn101 to Gln131. The segment covering Arg138 to Ser152 has biased composition (basic and acidic residues). A compositionally biased stretch (low complexity) spans Pro155–Ser170. Residues Pro205 to Arg214 show a composition bias toward basic and acidic residues. Positions Lys228–His299 are interaction with Pol II. A compositionally biased stretch (polar residues) spans Val254–Cys266. Residue Ser271 is modified to Phosphoserine. An important for transcription repressor activity region spans residues Leu300–Arg315. A coiled-coil region spans residues Gln303 to Leu328. Positions Gln316–Met341 are interaction with Pol II. Residues Lys340–Phe370 are disordered. Residues Glu349–Arg358 show a composition bias toward basic and acidic residues. Acidic residues predominate over residues Asp359–Phe370.

This sequence belongs to the GRINL1 family. As to quaternary structure, component of the Pol II(G) complex, which contains the RNA polymerase II (Pol II) core complex subunits and POLR2M and appears to be an abundant form of Pol II. Dephosphorylated at Ser-271 by the PNUTS-PP1 complex, promoting RNA polymerase II transcription pause-release.

The protein resides in the nucleus. Functionally, appears to be a stable component of the Pol II(G) complex form of RNA polymerase II (Pol II). Pol II synthesizes mRNA precursors and many functional non-coding RNAs and is the central component of the basal RNA polymerase II transcription machinery. May play a role in Mediator complex-dependent regulation of transcription activation. Acts in vitro as a negative regulator of transcriptional activation; this repression is relieved by the Mediator complex, which restores Pol II(G) activator-dependent transcription to a level equivalent to that of Pol II. This is DNA-directed RNA polymerase II subunit GRINL1A (POLR2M) from Bos taurus (Bovine).